We begin with the raw amino-acid sequence, 342 residues long: Ribosomal RNA small subunit methyltransferase C (342 aa).

Belongs to the methyltransferase superfamily. RsmC family. As to quaternary structure, monomer.

It is found in the cytoplasm. It carries out the reaction guanosine(1207) in 16S rRNA + S-adenosyl-L-methionine = N(2)-methylguanosine(1207) in 16S rRNA + S-adenosyl-L-homocysteine + H(+). Functionally, specifically methylates the guanine in position 1207 of 16S rRNA in the 30S particle. The protein is Ribosomal RNA small subunit methyltransferase C of Salmonella typhi.